The sequence spans 487 residues: UDP-N-acetylmuramate--L-alanine ligase (487 aa).

An ATP-binding site is contributed by G129–T135.

This sequence belongs to the MurCDEF family.

It localises to the cytoplasm. The catalysed reaction is UDP-N-acetyl-alpha-D-muramate + L-alanine + ATP = UDP-N-acetyl-alpha-D-muramoyl-L-alanine + ADP + phosphate + H(+). It participates in cell wall biogenesis; peptidoglycan biosynthesis. Cell wall formation. This chain is UDP-N-acetylmuramate--L-alanine ligase, found in Aliivibrio fischeri (strain ATCC 700601 / ES114) (Vibrio fischeri).